A 233-amino-acid chain; its full sequence is UPF0758 protein SRU_2338 (233 aa).

The region spanning 110 to 232 is the MPN domain; the sequence is QVTCPADVAD…HTSLAERGVI (123 aa). The Zn(2+) site is built by histidine 181, histidine 183, and aspartate 194. Residues 181-194 carry the JAMM motif motif; it reads HNHPSGNPEPSRED.

It belongs to the UPF0758 family.

In Salinibacter ruber (strain DSM 13855 / M31), this protein is UPF0758 protein SRU_2338.